We begin with the raw amino-acid sequence, 294 residues long: Ribosomal RNA small subunit methyltransferase H (294 aa).

S-adenosyl-L-methionine is bound by residues 37–39 (GGH), Asp58, Leu93, Asp105, and Gln112.

It belongs to the methyltransferase superfamily. RsmH family.

It localises to the cytoplasm. It carries out the reaction cytidine(1402) in 16S rRNA + S-adenosyl-L-methionine = N(4)-methylcytidine(1402) in 16S rRNA + S-adenosyl-L-homocysteine + H(+). Its function is as follows. Specifically methylates the N4 position of cytidine in position 1402 (C1402) of 16S rRNA. In Fervidobacterium nodosum (strain ATCC 35602 / DSM 5306 / Rt17-B1), this protein is Ribosomal RNA small subunit methyltransferase H.